A 346-amino-acid polypeptide reads, in one-letter code: N-acetyl-gamma-glutamyl-phosphate reductase (346 aa).

The active site involves C151.

It belongs to the NAGSA dehydrogenase family. Type 1 subfamily.

The protein resides in the cytoplasm. It carries out the reaction N-acetyl-L-glutamate 5-semialdehyde + phosphate + NADP(+) = N-acetyl-L-glutamyl 5-phosphate + NADPH + H(+). It functions in the pathway amino-acid biosynthesis; L-arginine biosynthesis; N(2)-acetyl-L-ornithine from L-glutamate: step 3/4. Functionally, catalyzes the NADPH-dependent reduction of N-acetyl-5-glutamyl phosphate to yield N-acetyl-L-glutamate 5-semialdehyde. The polypeptide is N-acetyl-gamma-glutamyl-phosphate reductase (Ehrlichia chaffeensis (strain ATCC CRL-10679 / Arkansas)).